We begin with the raw amino-acid sequence, 269 residues long: GTP cyclohydrolase FolE2 (269 aa).

It belongs to the GTP cyclohydrolase IV family.

The enzyme catalyses GTP + H2O = 7,8-dihydroneopterin 3'-triphosphate + formate + H(+). The protein operates within cofactor biosynthesis; 7,8-dihydroneopterin triphosphate biosynthesis; 7,8-dihydroneopterin triphosphate from GTP: step 1/1. Its function is as follows. Converts GTP to 7,8-dihydroneopterin triphosphate. The sequence is that of GTP cyclohydrolase FolE2 from Burkholderia ambifaria (strain MC40-6).